The chain runs to 617 residues: AUGMIN subunit 3 (617 aa).

Coiled-coil stretches lie at residues 107–140 (DATL…SSAL), 314–334 (LHSL…LYQK), and 481–504 (AIIQ…ENSL).

This sequence belongs to the HAUS3 family. As to quaternary structure, part of the augmin complex composed of 8 subunits. The complex acts on microtubules and interacts with gamma-tubulin in spindles and the phragmoplast. Interacts with AUG1.

It localises to the cytoplasm. Its subcellular location is the cytoskeleton. The protein localises to the spindle. It is found in the phragmoplast. Its function is as follows. Involved in microtubules reorganization during spindle and phragmoplast development. Required for gamma-tubulin localization during mitosis. This is AUGMIN subunit 3 from Arabidopsis thaliana (Mouse-ear cress).